A 123-amino-acid chain; its full sequence is Gamma-synuclein (123 aa).

A run of 2 repeats spans residues 20 to 30 (EKTKQGVTEAA) and 31 to 41 (EKTKEGVMYVG). Residues 20–67 (EKTKQGVTEAAEKTKEGVMYVGTKTKGERGTSVTSVAEKTKEQANAVS) form a 4 X 11 AA tandem repeats of [EGSA]-K-T-K-[EQ]-[GQ]-V-X(4) region. The stretch at 42–56 (TKTKGERGTSVTSVA) is one 3; approximate repeat. The stretch at 57 to 67 (EKTKEQANAVS) is repeat 4. Ser-67 and Ser-72 each carry phosphoserine. A disordered region spans residues 93–123 (GVVRKEDLEPPAQDQEAKEQEEGEEAKSGGD). Basic and acidic residues predominate over residues 107 to 123 (QEAKEQEEGEEAKSGGD). The residue at position 120 (Ser-120) is a Phosphoserine; by BARK1, CaMK2 and CK2.

The protein belongs to the synuclein family. As to quaternary structure, may be a centrosome-associated protein. Interacts with MYOC; affects its secretion and its aggregation. Post-translationally, phosphorylated. Phosphorylation by GRK5 appears to occur on residues distinct from the residue phosphorylated by other kinases. Specifically expressed in the peripheral nervous system. High expression in motoneurons of the brainstem. Also found in neurons of many other brain regions including the cerebellar cortex, thalamus, hypothalamus and CA1, CA2, CA3 and CA4 regions of the hippocampus.

Its subcellular location is the cytoplasm. It localises to the perinuclear region. The protein localises to the cytoskeleton. It is found in the microtubule organizing center. The protein resides in the centrosome. Its subcellular location is the spindle. Functionally, plays a role in neurofilament network integrity. May be involved in modulating axonal architecture during development and in the adult. In vitro, increases the susceptibility of neurofilament-H to calcium-dependent proteases. May also function in modulating the keratin network in skin. Activates the MAPK and Elk-1 signal transduction pathway. In Rattus norvegicus (Rat), this protein is Gamma-synuclein (Sncg).